The sequence spans 478 residues: Proline--tRNA ligase (478 aa).

Belongs to the class-II aminoacyl-tRNA synthetase family. ProS type 3 subfamily. As to quaternary structure, homodimer.

It localises to the cytoplasm. The enzyme catalyses tRNA(Pro) + L-proline + ATP = L-prolyl-tRNA(Pro) + AMP + diphosphate. Catalyzes the attachment of proline to tRNA(Pro) in a two-step reaction: proline is first activated by ATP to form Pro-AMP and then transferred to the acceptor end of tRNA(Pro). This is Proline--tRNA ligase from Methanococcoides burtonii (strain DSM 6242 / NBRC 107633 / OCM 468 / ACE-M).